A 101-amino-acid chain; its full sequence is Large ribosomal subunit protein bL21 (101 aa).

This sequence belongs to the bacterial ribosomal protein bL21 family. Part of the 50S ribosomal subunit. Contacts protein L20.

In terms of biological role, this protein binds to 23S rRNA in the presence of protein L20. This is Large ribosomal subunit protein bL21 from Corynebacterium efficiens (strain DSM 44549 / YS-314 / AJ 12310 / JCM 11189 / NBRC 100395).